Reading from the N-terminus, the 255-residue chain is MPSAVESPADAILNHSATSYNFRFSPFLRQTYQVGLSPDRPVCKAFQSGHCPNGTRCPERHVSDSKTSQPTGGLNSLVCKHWLRGLCKKGEHCEFLHEYNLRKMPECNFFMRNGYCSNGDECLYLHIDPQSRLPPCPHYDMGFCPLGPNCSKKHVRRKLCVFYLAGFCPDGPDCKEGAHPKWSKDLEKPTLKSEEKKDEEMRVEFSQDDMDRQRDQQRDRDRDDGGRHRGGHGGHGGHGGRGKWRGRGRYRARGH.

C3H1-type zinc fingers lie at residues serine 37 to aspartate 64, glycine 73 to asparagine 100, leucine 101 to proline 129, glutamine 130 to arginine 157, and leucine 159 to tryptophan 182. Over residues histidine 179–arginine 227 the composition is skewed to basic and acidic residues. Residues histidine 179 to histidine 255 form a disordered region. The span at histidine 238–histidine 255 shows a compositional bias: basic residues.

The protein belongs to the CPSF4/YTH1 family.

The protein localises to the nucleus. In terms of biological role, component of the cleavage factor I (CF I) involved in pre-mRNA 3'-end processing. The polypeptide is mRNA 3'-end-processing protein YTH1 (YTH1) (Gibberella zeae (strain ATCC MYA-4620 / CBS 123657 / FGSC 9075 / NRRL 31084 / PH-1) (Wheat head blight fungus)).